Reading from the N-terminus, the 401-residue chain is Phosrestin-1 (401 aa).

The residue at position 366 (Ser366) is a Phosphoserine; by CaMK.

It belongs to the arrestin family. In terms of processing, phosphorylated upon light exposure. As to expression, expressed in photoreceptor cells.

It localises to the cell projection. Its subcellular location is the rhabdomere. Functionally, regulates photoreceptor cell deactivation. Arr1 and Arr2 proteins are mediators of rhodopsin inactivation and are essential for the termination of the phototransduction cascade. Involved in regulating normal cycles of per nuclear accumulation in brain circadian neurons and thus is important for normal circadian behavior. In the dark, functions with Arr1 to promote the formation of cytosolic Bdbt foci, which are required for dco localization to photoreceptor nuclei where it phosphorylates and activates degradation of per. This chain is Phosrestin-1 (Arr2), found in Drosophila melanogaster (Fruit fly).